Consider the following 799-residue polypeptide: Histidine biosynthesis trifunctional protein (799 aa).

The tract at residues Met1 to Phe229 is phosphoribosyl-AMP cyclohydrolase. The segment at Cys230–Thr312 is phosphoribosyl-ATP pyrophosphohydrolase. The tract at residues Asn313–Gln799 is histidinol dehydrogenase. 2 residues coordinate Zn(2+): Gln618 and His621. Catalysis depends on residues Glu687 and His688. Positions 721 and 780 each coordinate Zn(2+).

The protein in the C-terminal section; belongs to the histidinol dehydrogenase family. Requires Zn(2+) as cofactor.

The enzyme catalyses 1-(5-phospho-beta-D-ribosyl)-5'-AMP + H2O = 1-(5-phospho-beta-D-ribosyl)-5-[(5-phospho-beta-D-ribosylamino)methylideneamino]imidazole-4-carboxamide. The catalysed reaction is 1-(5-phospho-beta-D-ribosyl)-ATP + H2O = 1-(5-phospho-beta-D-ribosyl)-5'-AMP + diphosphate + H(+). It catalyses the reaction L-histidinol + 2 NAD(+) + H2O = L-histidine + 2 NADH + 3 H(+). The protein operates within amino-acid biosynthesis; L-histidine biosynthesis; L-histidine from 5-phospho-alpha-D-ribose 1-diphosphate: step 2/9. It participates in amino-acid biosynthesis; L-histidine biosynthesis; L-histidine from 5-phospho-alpha-D-ribose 1-diphosphate: step 3/9. It functions in the pathway amino-acid biosynthesis; L-histidine biosynthesis; L-histidine from 5-phospho-alpha-D-ribose 1-diphosphate: step 9/9. This Saccharomyces bayanus (Yeast) protein is Histidine biosynthesis trifunctional protein (HIS4).